The chain runs to 394 residues: 1-deoxy-D-xylulose 5-phosphate reductoisomerase (394 aa).

Thr-13, Gly-14, Thr-15, Ile-16, and Asn-125 together coordinate NADPH. Position 126 (Lys-126) interacts with 1-deoxy-D-xylulose 5-phosphate. Glu-127 is a binding site for NADPH. Position 151 (Asp-151) interacts with Mn(2+). 1-deoxy-D-xylulose 5-phosphate is bound by residues Ser-152, Glu-153, Ser-182, and His-205. Glu-153 serves as a coordination point for Mn(2+). Gly-211 serves as a coordination point for NADPH. 1-deoxy-D-xylulose 5-phosphate contacts are provided by Ser-218, Asn-223, Lys-224, and Glu-227. Glu-227 serves as a coordination point for Mn(2+).

It belongs to the DXR family. Mg(2+) is required as a cofactor. The cofactor is Mn(2+).

It catalyses the reaction 2-C-methyl-D-erythritol 4-phosphate + NADP(+) = 1-deoxy-D-xylulose 5-phosphate + NADPH + H(+). The protein operates within isoprenoid biosynthesis; isopentenyl diphosphate biosynthesis via DXP pathway; isopentenyl diphosphate from 1-deoxy-D-xylulose 5-phosphate: step 1/6. In terms of biological role, catalyzes the NADPH-dependent rearrangement and reduction of 1-deoxy-D-xylulose-5-phosphate (DXP) to 2-C-methyl-D-erythritol 4-phosphate (MEP). This chain is 1-deoxy-D-xylulose 5-phosphate reductoisomerase, found in Methylobacillus flagellatus (strain ATCC 51484 / DSM 6875 / VKM B-1610 / KT).